The primary structure comprises 603 residues: NADH-ubiquinone oxidoreductase chain 5 (603 aa).

A run of 16 helical transmembrane segments spans residues 4-24, 38-58, 87-107, 117-137, 140-160, 171-191, 211-233, 241-261, 273-293, 301-320, 331-351, 366-386, 409-429, 457-477, 488-508, and 583-603; these read LPTL…LSPL, MAVS…MHSG, LIFM…SLWY, FFKY…ANNL, LFIG…WWYG, AMIY…WFLL, LPLT…HPWL, TPVS…FLLI, ILTL…ICAL, IIAF…IGIN, THAF…HSLG, LPFT…MPFL, LLIT…IIFF, LMLG…PTTV, FMAL…SSFT, and MIKL…LLII.

The protein belongs to the complex I subunit 5 family.

The protein localises to the mitochondrion inner membrane. The catalysed reaction is a ubiquinone + NADH + 5 H(+)(in) = a ubiquinol + NAD(+) + 4 H(+)(out). Its function is as follows. Core subunit of the mitochondrial membrane respiratory chain NADH dehydrogenase (Complex I) that is believed to belong to the minimal assembly required for catalysis. Complex I functions in the transfer of electrons from NADH to the respiratory chain. The immediate electron acceptor for the enzyme is believed to be ubiquinone. The polypeptide is NADH-ubiquinone oxidoreductase chain 5 (MT-ND5) (Dugong dugon (Dugong)).